The sequence spans 654 residues: Endoplasmic reticulum chaperone BiP (654 aa).

The N-terminal stretch at 1-18 (MKLSLVAAVLLLLCAARA) is a signal peptide. A required for interaction with ELAPOR1 region spans residues 1–80 (MKLSLVAAVL…EGERLIGDAA (80 aa)). 36 to 39 (GTTY) serves as a coordination point for ATP. S86 is modified (phosphoserine). K96 lines the ATP pocket. At K125 the chain carries N6-acetyllysine. Positions 125–280 (KPYIQVDIGG…KKKTGKDVRK (156 aa)) are nucleotide-binding (NBD). Y160 bears the 3'-nitrotyrosine mark. K213 is subject to N6-acetyllysine. Residue 227-229 (GGT) coordinates ATP. K271 carries the post-translational modification N6-acetyllysine. 293 to 300 (EKAKRALS) is a binding site for ATP. At K326 the chain carries N6-acetyllysine. Residue K352 forms a Glycyl lysine isopeptide (Lys-Gly) (interchain with G-Cter in SUMO2) linkage. K353 carries the N6-acetyllysine; alternate modification. K353 is covalently cross-linked (Glycyl lysine isopeptide (Lys-Gly) (interchain with G-Cter in SUMO1); alternate). 364 to 367 (GSTR) lines the ATP pocket. Residues 409–419 (QDTGDLVLLDV) are interdomain linker. A substrate-binding (SBD) region spans residues 420 to 500 (CPLTLGIETV…PRGVPQIEVT (81 aa)). The residue at position 447 (K447) is an N6-succinyllysine. The residue at position 492 (R492) is an Omega-N-methylarginine. Residue T518 is modified to O-AMP-threonine; alternate. At T518 the chain carries Phosphothreonine; alternate. The residue at position 585 (K585) is an N6,N6,N6-trimethyllysine; by METTL21A; in vitro. K585 bears the N6,N6-dimethyllysine; alternate mark. N6-methyllysine; alternate is present on K585. Residue K591 is modified to N6-methyllysine. The tract at residues 632–654 (SKLYGSAGPPPTGEEDTSERDEL) is disordered. T643 and T648 each carry phosphothreonine. Residues 644–654 (GEEDTSERDEL) show a composition bias toward acidic residues. S649 is subject to Phosphoserine. A Prevents secretion from ER motif is present at residues 651–654 (RDEL).

This sequence belongs to the heat shock protein 70 family. In terms of assembly, monomer and homooligomer; homooligomerization via the interdomain linker inactivates the chaperone activity and acts as a storage of HSPA5/BiP molecules. Interacts with DNAJC1 (via J domain). Component of an EIF2 complex at least composed of CELF1/CUGBP1, CALR, CALR3, EIF2S1, EIF2S2, HSP90B1 and HSPA5. Part of a large chaperone multiprotein complex comprising DNAJB11, HSP90B1, HSPA5, HYOU, PDIA2, PDIA4, PDIA6, PPIB, SDF2L1, UGGT1 and very small amounts of ERP29, but not, or at very low levels, CALR nor CANX. Interacts with TMEM132A and TRIM21. May form a complex with ERLEC1, OS9, SEL1L and SYVN1. Interacts with DNAJC10. Interacts with DNAJB9/ERdj4; leading to recruit HSPA5/BiP to ERN1/IRE1. Interacts with ERN1/IRE1 (via luminal domain); the interaction takes place following interaction with DNAJB9/ERdj4 and leads to inactivate ERN1/IRE1, the interaction also competitively inhibits ERN1 interaction with MANF. Interacts directly with MANF (via SAP domain); the interaction inhibits ATP binding to HSPA5/BiP and subsequent nucleotide exchange. Interacts with EIF2AK3/PERK (via luminal domain); interaction leads to inactivate EIF2AK3/PERK. Interacts with MX1. Interacts with METTL23. Interacts with CEMIP; the interaction induces calcium leakage from the endoplasmic reticulum and cell migration. Interacts with PCSK4 form; the interaction takes place in the endoplasmic reticulum. Interacts with CIPC. Interacts with CCDC88B (via C-terminus); the interaction opposes ERN1-mediated JNK activation, protecting against apoptosis. Interacts with INPP5K; necessary for INPP5K localization at the endoplasmic reticulum. Interacts with MANF; the interaction is direct. Interacts with LOXL2; leading to activate the ERN1/IRE1-XBP1 pathway of the unfolded protein response. Interacts with CLU under stressed condition; interaction increases CLU protein stability; facilitates its retrotranslocation and redistribution to the mitochondria; cooperatively suppress stress-induced apoptosis by stabilizing mitochondrial membrane integrity. Interacts with CCDC47. Interacts with CLN3. Interacts with ELAPOR1; may regulate the function of HSPA5 in apoptosis and cell proliferation. Interacts with CASP7. Interacts with ILDR2; the interaction stabilizes ILDR2 expression. Interacts with ADAM7. In terms of processing, in unstressed cells, AMPylation at Thr-518 by FICD inactivates the chaperome activity: AMPylated form is locked in a relatively inert state and only weakly stimulated by J domain-containing proteins. In response to endoplasmic reticulum stress, de-AMPylation by the same protein, FICD, restores the chaperone activity.

It localises to the endoplasmic reticulum lumen. Its subcellular location is the melanosome. The protein resides in the cytoplasm. It is found in the cell surface. It catalyses the reaction ATP + H2O = ADP + phosphate + H(+). The chaperone activity is regulated by ATP-induced allosteric coupling of the nucleotide-binding (NBD) and substrate-binding (SBD) domains. In the ADP-bound and nucleotide-free (apo) states, the two domains have little interaction. In contrast, in the ATP-bound state the two domains are tightly coupled, which results in drastically accelerated kinetics in both binding and release of polypeptide substrates. J domain-containing co-chaperones (DNAJB9/ERdj4 or DNAJC10/ERdj5) stimulate the ATPase activity and are required for efficient substrate recognition by HSPA5/BiP. Homooligomerization inactivates participating HSPA5/BiP protomers and probably act as reservoirs to store HSPA5/BiP molecules when they are not needed by the cell. In terms of biological role, endoplasmic reticulum chaperone that plays a key role in protein folding and quality control in the endoplasmic reticulum lumen. Involved in the correct folding of proteins and degradation of misfolded proteins via its interaction with DNAJC10/ERdj5, probably to facilitate the release of DNAJC10/ERdj5 from its substrate. Acts as a key repressor of the EIF2AK3/PERK and ERN1/IRE1-mediated unfolded protein response (UPR). In the unstressed endoplasmic reticulum, recruited by DNAJB9/ERdj4 to the luminal region of ERN1/IRE1, leading to disrupt the dimerization of ERN1/IRE1, thereby inactivating ERN1/IRE1. Also binds and inactivates EIF2AK3/PERK in unstressed cells. Accumulation of misfolded protein in the endoplasmic reticulum causes release of HSPA5/BiP from ERN1/IRE1 and EIF2AK3/PERK, allowing their homodimerization and subsequent activation. Plays an auxiliary role in post-translational transport of small presecretory proteins across endoplasmic reticulum (ER). May function as an allosteric modulator for SEC61 channel-forming translocon complex, likely cooperating with SEC62 to enable the productive insertion of these precursors into SEC61 channel. Appears to specifically regulate translocation of precursors having inhibitory residues in their mature region that weaken channel gating. May also play a role in apoptosis and cell proliferation. The protein is Endoplasmic reticulum chaperone BiP of Ictidomys tridecemlineatus (Thirteen-lined ground squirrel).